The sequence spans 374 residues: Protein Brevis radix-like 2 (374 aa).

Disordered stretches follow at residues 12–43 (NTNN…IKSL) and 57–80 (AYKS…ADSD). A compositionally biased stretch (polar residues) spans 65–80 (SGSSNQNKNRSYADSD). A BRX 1 domain is found at 143–198 (KEWVAQVEPGVLITFVSLPEGGNDMKRIRFSREMFDKWQAQKWWAENFDKVMELYN). The interval 205–316 (QSVPLPTPPR…EELSVSNASD (112 aa)) is disordered. 2 stretches are compositionally biased toward polar residues: residues 246–259 (SSGS…TQTQ) and 267–288 (GLAT…SSVD). The span at 289–307 (ESARSSFSREEEEADHSGE) shows a compositional bias: basic and acidic residues. One can recognise a BRX 2 domain in the interval 319–374 (TEWVEQDEAGVYITIRALPDGTRELRRVRFSREKFGETNARLWWEQNRARIQQQYL).

Belongs to the BRX family. Expressed in roots.

It localises to the nucleus. This Arabidopsis thaliana (Mouse-ear cress) protein is Protein Brevis radix-like 2 (BRXL2).